A 259-amino-acid chain; its full sequence is Short-chain dehydrogenase reductase 5 (259 aa).

Residue 12–36 coordinates NAD(+); the sequence is IITGGASGIGAEAARLFTDHGAKVV. Serine 144 is a substrate binding site. Tyrosine 157 (proton acceptor) is an active-site residue.

It belongs to the short-chain dehydrogenases/reductases (SDR) family.

The polypeptide is Short-chain dehydrogenase reductase 5 (SDR5) (Arabidopsis thaliana (Mouse-ear cress)).